The chain runs to 142 residues: MKTFTAKPETVKRDWYVVDATGKTLGRLATELALRLRGKHKAEYTPHVDTGDYIIVLNADKVAVTGNKRTDKVYYHHTGHIGGIKQATFEEMIARRPERVIEIAVKGMLPKGPLGRAMFRKLKVYAGNEHNHAAQQPQVLDI.

Belongs to the universal ribosomal protein uL13 family. In terms of assembly, part of the 50S ribosomal subunit.

In terms of biological role, this protein is one of the early assembly proteins of the 50S ribosomal subunit, although it is not seen to bind rRNA by itself. It is important during the early stages of 50S assembly. The sequence is that of Large ribosomal subunit protein uL13 from Citrobacter koseri (strain ATCC BAA-895 / CDC 4225-83 / SGSC4696).